A 20-amino-acid chain; its full sequence is Disintegrin (20 aa).

One can recognise a Disintegrin domain in the interval 1 to 20 (EAGEECDCGTPENPCCDAAT). Intrachain disulfides connect C6-C15 and C8-C16.

The protein belongs to the venom metalloproteinase (M12B) family. P-II subfamily. P-IIa sub-subfamily. Monomer. In terms of tissue distribution, expressed by the venom gland.

The protein resides in the secreted. Functionally, inhibits fibrinogen interaction with platelets. Acts by binding to alpha-IIb/beta-3 (ITGA2B/ITGB3) on the platelet surface and inhibits aggregation induced by ADP, thrombin, platelet-activating factor and collagen. This chain is Disintegrin, found in Bothrops fonsecai (Fonseca's lancehead).